We begin with the raw amino-acid sequence, 136 residues long: Small cardioactive peptides (136 aa).

Positions 1 to 24 are cleaved as a signal peptide; sequence METSVSRVTVSLTLLVLIICSADA. Methionine amide occurs at positions 33 and 46. Residues 49 to 135 constitute a propeptide, carboxy-terminal peptide; sequence SQMKTETGTD…VLSKLKSLLQ (87 aa).

The protein belongs to the SCP family. Post-translationally, contains three disulfide bonds. As to expression, highly expressed in the buccal ganglion.

Its subcellular location is the secreted. Functionally, involved in the stimulation of contractile activity in the gut, the increase of the amplitude of the heart beat, and enhancement of the contractile response of the radula closer muscle. The protein is Small cardioactive peptides of Aplysia californica (California sea hare).